The chain runs to 864 residues: Protein translocase subunit SecA (864 aa).

ATP-binding positions include glutamine 85, 103–107 (GEGKT), and aspartate 542.

Belongs to the SecA family. As to quaternary structure, monomer and homodimer. Part of the essential Sec protein translocation apparatus which comprises SecA, SecYEG and auxiliary proteins SecDF. Other proteins may also be involved.

Its subcellular location is the cell inner membrane. The protein localises to the cytoplasm. The catalysed reaction is ATP + H2O + cellular proteinSide 1 = ADP + phosphate + cellular proteinSide 2.. Its function is as follows. Part of the Sec protein translocase complex. Interacts with the SecYEG preprotein conducting channel. Has a central role in coupling the hydrolysis of ATP to the transfer of proteins into and across the cell membrane, serving as an ATP-driven molecular motor driving the stepwise translocation of polypeptide chains across the membrane. The polypeptide is Protein translocase subunit SecA (Fervidobacterium nodosum (strain ATCC 35602 / DSM 5306 / Rt17-B1)).